We begin with the raw amino-acid sequence, 137 residues long: Nucleoside diphosphate kinase (137 aa).

ATP contacts are provided by K9, F57, R85, T91, R102, and N112. Residue H115 is the Pros-phosphohistidine intermediate of the active site.

It belongs to the NDK family. As to quaternary structure, homotetramer. It depends on Mg(2+) as a cofactor.

The protein resides in the cytoplasm. It carries out the reaction a 2'-deoxyribonucleoside 5'-diphosphate + ATP = a 2'-deoxyribonucleoside 5'-triphosphate + ADP. It catalyses the reaction a ribonucleoside 5'-diphosphate + ATP = a ribonucleoside 5'-triphosphate + ADP. Major role in the synthesis of nucleoside triphosphates other than ATP. The ATP gamma phosphate is transferred to the NDP beta phosphate via a ping-pong mechanism, using a phosphorylated active-site intermediate. The chain is Nucleoside diphosphate kinase from Campylobacter jejuni subsp. jejuni serotype O:23/36 (strain 81-176).